The following is a 709-amino-acid chain: Septu protein PtuA (709 aa).

Its function is as follows. Component of antiviral defense system Septu type II, composed of PtuA and PtuB. Expression of Septu type II in B.subtilis (strain BEST7003) confers resistance to phages SBSphiC and SpBeta. May be an ATPase. This is Septu protein PtuA from Bacillus mycoides (strain KBAB4) (Bacillus weihenstephanensis).